The primary structure comprises 692 residues: UvrABC system protein C (692 aa).

Residues 16–95 enclose the GIY-YIG domain; it reads ETPGVYRFRD…IKEFDPRFNV (80 aa). In terms of domain architecture, UVR spans 208–243; sequence GRYLRRLEREMRAAAEAQEYERAARLRDDIGALRRA. The tract at residues 492–511 is disordered; sequence GELEEYPGAPTGDDEAPETG.

The protein belongs to the UvrC family. Interacts with UvrB in an incision complex.

It localises to the cytoplasm. Functionally, the UvrABC repair system catalyzes the recognition and processing of DNA lesions. UvrC both incises the 5' and 3' sides of the lesion. The N-terminal half is responsible for the 3' incision and the C-terminal half is responsible for the 5' incision. In Parafrankia sp. (strain EAN1pec), this protein is UvrABC system protein C.